The primary structure comprises 147 residues: Large ribosomal subunit protein uL15 (147 aa).

The disordered stretch occupies residues 1–42 (MTIKVHHLRPAPGAKTTKTRVGRGEGSKGKTAGRGTKGSKAR).

It belongs to the universal ribosomal protein uL15 family. In terms of assembly, part of the 50S ribosomal subunit.

Its function is as follows. Binds to the 23S rRNA. This is Large ribosomal subunit protein uL15 from Salinispora tropica (strain ATCC BAA-916 / DSM 44818 / JCM 13857 / NBRC 105044 / CNB-440).